The sequence spans 332 residues: Anthranilate phosphoribosyltransferase (332 aa).

Residues Gly-79, 82–83 (GD), Ser-87, 89–92 (NIST), 107–115 (KHGNRSVSS), and Ser-119 contribute to the 5-phospho-alpha-D-ribose 1-diphosphate site. Anthranilate is bound at residue Gly-79. Ser-91 lines the Mg(2+) pocket. Asn-110 is an anthranilate binding site. Arg-165 contributes to the anthranilate binding site. Asp-223 and Glu-224 together coordinate Mg(2+).

It belongs to the anthranilate phosphoribosyltransferase family. As to quaternary structure, homodimer. It depends on Mg(2+) as a cofactor.

The catalysed reaction is N-(5-phospho-beta-D-ribosyl)anthranilate + diphosphate = 5-phospho-alpha-D-ribose 1-diphosphate + anthranilate. Its pathway is amino-acid biosynthesis; L-tryptophan biosynthesis; L-tryptophan from chorismate: step 2/5. In terms of biological role, catalyzes the transfer of the phosphoribosyl group of 5-phosphorylribose-1-pyrophosphate (PRPP) to anthranilate to yield N-(5'-phosphoribosyl)-anthranilate (PRA). The protein is Anthranilate phosphoribosyltransferase of Serratia proteamaculans (strain 568).